A 139-amino-acid chain; its full sequence is Hydrogenase maturation factor HypA (139 aa).

Histidine 2 is a Ni(2+) binding site. Residues cysteine 73, cysteine 76, cysteine 110, and cysteine 113 each contribute to the Zn(2+) site.

This sequence belongs to the HypA/HybF family.

In terms of biological role, involved in the maturation of [NiFe] hydrogenases. Required for nickel insertion into the metal center of the hydrogenase. The sequence is that of Hydrogenase maturation factor HypA from Thermococcus onnurineus (strain NA1).